The sequence spans 47 residues: Potamin-1 (47 aa).

3 disulfides stabilise this stretch: Cys-3-Cys-40, Cys-6-Cys-24, and Cys-7-Cys-36.

Inhibitor of serine proteases chymotrypsin, papain and trypsin. Has strong antifungal activity against C.albicans and R.solani. Has antibacterial activity against the Gram-positive bacterium C.michiganense, but lacks antibacterial activity against the Gram-positive bacterium S.aureus. Lacks hemolytic activity against human erythrocytes. The protein is Potamin-1 of Solanum tuberosum (Potato).